Here is a 740-residue protein sequence, read N- to C-terminus: MEQTYEYAWIIPFIPLPVPMLIGAGLFLFPTATKSFRRMWAFQSVLLLSIVMVFSIYLSIQQINSSSFYQYVWSWIINNDFSLDFGYLIDPLTSIMSILITTVGIMVLIYSDNYMAHDQGYLRFFAYMSFFSTSMLGLVTSSNLIQIYIFWELVGLCSYLLIGFWFTRPVAANACQKAFVTNRVGDFGLLLGILGFYWITGSFEFRDLFEIFNNLIYNNEVDFLFVTLCAVLLFAGAVAKSAQFPLHVWLPDAMEGPTPISALIHAATMVAAGIFLVARLLPLFRVIPYIMYLISVIGIITVLLGATLALAQKDIKRGLAYSTMSQLGYMMLALGMGSYRSALFHLITHAYSKALLFLGSGSIIHSMETIVGYSPAKSQNMGLMGGLRKHVPISKITFLLGTLSLCGIPPLACFWSKDEILNDSWLYSPIFAIIAWATAGLTAFYMFRIYLLTFEGHLNAHFQNYGGKQKTPFYSISLWGKNGVKKNSCLLTMNNNESTYFFAKTKYPIDKNGRKMTRPFMTIAHFEHKAVYSYPYESDNTMLFPIFVLGLFTLFVGSIGIPFNQEGGNLDILSKWLAPSINLLHQKSNNSMDWNEFLKDAVLSVSIAYFGIFIASFLYKPIYSSLKNFELINSFVKKGPKRILWDKIINGIYDWSYNRAYIDAFYTRFLVGGIRGLAEFTHFFDRRVIDGMTNGVGVISFIVGEGIKYIGGGRISSYLFLYLAYVSIFLLVYYLLFSTL.

The next 16 helical transmembrane spans lie at 9–29 (WIIPFIPLPVPMLIGAGLFLF), 40–60 (WAFQSVLLLSIVMVFSIYLSI), 89–109 (IDPLTSIMSILITTVGIMVLI), 125–145 (FAYMSFFSTSMLGLVTSSNLI), 147–167 (IYIFWELVGLCSYLLIGFWFT), 185–205 (GDFGLLLGILGFYWITGSFEF), 219–239 (NEVDFLFVTLCAVLLFAGAVA), 258–278 (TPISALIHAATMVAAGIFLVA), 286–306 (VIPYIMYLISVIGIITVLLGA), 327–347 (LGYMMLALGMGSYRSALFHLI), 354–374 (ALLFLGSGSIIHSMETIVGYS), 396–416 (ITFLLGTLSLCGIPPLACFWS), 425–445 (WLYSPIFAIIAWATAGLTAFY), 543–563 (LFPIFVLGLFTLFVGSIGIPF), 602–622 (VLSVSIAYFGIFIASFLYKPI), and 717–737 (SYLFLYLAYVSIFLLVYYLLF).

This sequence belongs to the complex I subunit 5 family. NDH is composed of at least 16 different subunits, 5 of which are encoded in the nucleus.

Its subcellular location is the plastid. The protein localises to the chloroplast thylakoid membrane. The enzyme catalyses a plastoquinone + NADH + (n+1) H(+)(in) = a plastoquinol + NAD(+) + n H(+)(out). The catalysed reaction is a plastoquinone + NADPH + (n+1) H(+)(in) = a plastoquinol + NADP(+) + n H(+)(out). Its function is as follows. NDH shuttles electrons from NAD(P)H:plastoquinone, via FMN and iron-sulfur (Fe-S) centers, to quinones in the photosynthetic chain and possibly in a chloroplast respiratory chain. The immediate electron acceptor for the enzyme in this species is believed to be plastoquinone. Couples the redox reaction to proton translocation, and thus conserves the redox energy in a proton gradient. This chain is NAD(P)H-quinone oxidoreductase subunit 5, chloroplastic (ndhF), found in Nicotiana sylvestris (Wood tobacco).